A 262-amino-acid polypeptide reads, in one-letter code: Snake venom serine proteinase 1 (262 aa).

Residues 1–18 (MVLIRVLANLLILQLSYA) form the signal peptide. Residues 19–24 (QKSSEL) constitute a propeptide that is removed on maturation. The 229-residue stretch at 25 to 253 (VIGGDECNIN…HLDWIQSIIA (229 aa)) folds into the Peptidase S1 domain. 5 cysteine pairs are disulfide-bonded: C31–C165, C52–C68, C144–C214, C176–C193, and C204–C229. Residue H67 is the Charge relay system of the active site. N-linked (GlcNAc...) asparagine glycosylation occurs at N105. The Charge relay system role is filled by D112. The active-site Charge relay system is the S208.

This sequence belongs to the peptidase S1 family. Snake venom subfamily. In terms of assembly, monomer. Expressed by the venom gland.

Its subcellular location is the secreted. Its function is as follows. Snake venom serine protease that may act in the hemostasis system of the prey. The protein is Snake venom serine proteinase 1 of Crotalus adamanteus (Eastern diamondback rattlesnake).